A 267-amino-acid polypeptide reads, in one-letter code: Alpha carbonic anhydrase 4 (267 aa).

Positions 1 to 26 are cleaved as a signal peptide; sequence MDTNAKTIFFMAMCFIYLSFPNISHA. Asparagine 22 is a glycosylation site (N-linked (GlcNAc...) asparagine). An Alpha-carbonic anhydrase domain is found at 34–264; it reads TPFTYEQKTE…SKGRSVWFYD (231 aa). The cysteines at positions 59 and 214 are disulfide-linked. Catalysis depends on histidine 99, which acts as the Proton acceptor. Zn(2+) is bound by residues histidine 125 and histidine 127. Asparagine 135 is a glycosylation site (N-linked (GlcNAc...) asparagine). Histidine 144 serves as a coordination point for Zn(2+). 210–211 contributes to the substrate binding site; it reads TV.

It belongs to the alpha-class carbonic anhydrase family. Zn(2+) serves as cofactor. N-glycosylated.

The protein resides in the plastid. It localises to the chloroplast stroma. It carries out the reaction hydrogencarbonate + H(+) = CO2 + H2O. Reversible hydration of carbon dioxide. This Arabidopsis thaliana (Mouse-ear cress) protein is Alpha carbonic anhydrase 4 (ACA4).